We begin with the raw amino-acid sequence, 168 residues long: Protein OPG162 (168 aa).

The Intravirion portion of the chain corresponds to 1 to 14 (MKSLNRQTVSRFKK). The helical transmembrane segment at 15–37 (LSVPAAIMMILSTIISGIGTFLH) threads the bilayer. At 38–168 (YKEELMPSAC…SVLCVKKFYK (131 aa)) the chain is on the virion surface side. One can recognise a C-type lectin domain in the interval 54-163 (YDKHCYLDTN…CKSTQSVLCV (110 aa)). Cystine bridges form between Cys-75–Cys-162 and Cys-141–Cys-154. A glycan (N-linked (GlcNAc...) asparagine; by host) is linked at Asn-133.

It belongs to the orthopoxvirus OPG162 protein family. In terms of assembly, interacts with protein OPG161. Interacts with protein OPG164. Interacts with protein OPG190.

The protein resides in the virion membrane. It is found in the host Golgi apparatus. Forms a complex with OPG162 and OPG190 to coordinate the incorporation of OPG164 into wrapped enveloped virion (EV) membranes and, subsequently, the production of actin tails. Therefore plays an essential role in efficient cell-to-cell spread of viral particles. This is Protein OPG162 (OPG162) from Vaccinia virus (strain Western Reserve) (VACV).